A 134-amino-acid chain; its full sequence is Profilin-3 (134 aa).

A disulfide bridge links C13 with C118. The short motif at 84–100 (AVIRGKKGSGGITIKKT) is the Involved in PIP2 interaction element. The residue at position 114 (T114) is a Phosphothreonine.

This sequence belongs to the profilin family. As to quaternary structure, occurs in many kinds of cells as a complex with monomeric actin in a 1:1 ratio. Phosphorylated by MAP kinases.

Its subcellular location is the cytoplasm. It localises to the cytoskeleton. Its function is as follows. Binds to actin and affects the structure of the cytoskeleton. At high concentrations, profilin prevents the polymerization of actin, whereas it enhances it at low concentrations. In Olea europaea (Common olive), this protein is Profilin-3.